The chain runs to 457 residues: Argininosuccinate lyase (457 aa).

This sequence belongs to the lyase 1 family. Argininosuccinate lyase subfamily.

Its subcellular location is the cytoplasm. The catalysed reaction is 2-(N(omega)-L-arginino)succinate = fumarate + L-arginine. It participates in amino-acid biosynthesis; L-arginine biosynthesis; L-arginine from L-ornithine and carbamoyl phosphate: step 3/3. This chain is Argininosuccinate lyase, found in Shigella flexneri serotype 5b (strain 8401).